We begin with the raw amino-acid sequence, 232 residues long: MNRYKFNDIENRLGVYFNNPSLIKTALTHSSFGNQFKDAKYNERLEFLGDSVLQLCITEYLFNKFKDKSEGELTKIRSLIVCENSLYEIAKKLSLGEYIRMSKGEELTGGRERMSIQADAVEAVIAAVYLDKGIGFVNDFILLHFEEMINKAINNEIVLDFKTKLQELLQKDGEILIQYELLKYEGPPHRRKFFTNVIINEKVMGIGEGYSKKEAEQNAAKEALKRLEKNYE.

The RNase III domain occupies 6 to 133 (FNDIENRLGV…VIAAVYLDKG (128 aa)). Glutamate 46 contacts Mg(2+). The active site involves aspartate 50. Residues aspartate 119 and glutamate 122 each contribute to the Mg(2+) site. The active site involves glutamate 122. The DRBM domain maps to 160–229 (DFKTKLQELL…AKEALKRLEK (70 aa)).

It belongs to the ribonuclease III family. Homodimer. Requires Mg(2+) as cofactor.

Its subcellular location is the cytoplasm. The enzyme catalyses Endonucleolytic cleavage to 5'-phosphomonoester.. Its function is as follows. Digests double-stranded RNA. Involved in the processing of primary rRNA transcript to yield the immediate precursors to the large and small rRNAs (23S and 16S). Processes some mRNAs, and tRNAs when they are encoded in the rRNA operon. Processes pre-crRNA and tracrRNA of type II CRISPR loci if present in the organism. In Clostridium botulinum (strain Alaska E43 / Type E3), this protein is Ribonuclease 3.